We begin with the raw amino-acid sequence, 211 residues long: Uracil phosphoribosyltransferase (211 aa).

Residues arginine 81, arginine 106, and 133–141 contribute to the 5-phospho-alpha-D-ribose 1-diphosphate site; that span reads DPMLATGNS. Uracil contacts are provided by residues isoleucine 196 and 201–203; that span reads GDA. A 5-phospho-alpha-D-ribose 1-diphosphate-binding site is contributed by aspartate 202.

The protein belongs to the UPRTase family. Mg(2+) is required as a cofactor.

The enzyme catalyses UMP + diphosphate = 5-phospho-alpha-D-ribose 1-diphosphate + uracil. It participates in pyrimidine metabolism; UMP biosynthesis via salvage pathway; UMP from uracil: step 1/1. Its activity is regulated as follows. Allosterically activated by GTP. In terms of biological role, catalyzes the conversion of uracil and 5-phospho-alpha-D-ribose 1-diphosphate (PRPP) to UMP and diphosphate. The polypeptide is Uracil phosphoribosyltransferase (Paracoccus denitrificans (strain Pd 1222)).